An 871-amino-acid polypeptide reads, in one-letter code: Tegument protein UL47 homolog (871 aa).

Residues 1-212 are disordered; that stretch reads MDQHHGARGG…DEDDMEVIRD (212 aa). Residues 13-33 carry the Nuclear localization signal motif; it reads IRRPRRSIESRSHPFRATGNT. 2 stretches are compositionally biased toward polar residues: residues 30–41 and 59–81; these read TGNTQRTYSTPR and EQAS…STSF. Composition is skewed to acidic residues over residues 114-134, 146-155, and 185-207; these read SSSE…EEDQ, SSDENDEEED, and SESE…EDDM.

This sequence belongs to the alphaherpesvirinae HHV-1 UL47 family. As to quaternary structure, interacts with US3 kinase. Interacts with UL31 and UL34; these interactions seem important for efficient virion nuclear egress. Interacts with UL41/VHS. Phosphorylated by US3. This phosphorylation is required for proper nuclear localization.

It localises to the virion tegument. The protein resides in the host nucleus. It is found in the host cytoplasm. Its function is as follows. Tegument protein that can bind to various RNA transcripts. Plays a role in the attenuation of selective viral and cellular mRNA degradation by modulating the activity of host shutoff RNase UL41/VHS. Also plays a role in the primary envelopment of virions in the perinuclear space, probably by interacting with two nuclear egress proteins UL31 and UL34. The protein is Tegument protein UL47 homolog of Equine herpesvirus 1 (strain V592) (EHV-1).